A 203-amino-acid chain; its full sequence is ER membrane protein complex subunit 8/9 homolog (203 aa).

An MPN domain is found at 4 to 140; it reads YKVSERAYAK…IQVFNCPGDS (137 aa).

This sequence belongs to the EMC8/EMC9 family. As to quaternary structure, component of the ER membrane protein complex (EMC).

The protein localises to the endoplasmic reticulum membrane. Functionally, part of the endoplasmic reticulum membrane protein complex (EMC) that enables the energy-independent insertion into endoplasmic reticulum membranes of newly synthesized multi-pass membrane proteins like rhodopsins. This chain is ER membrane protein complex subunit 8/9 homolog, found in Drosophila melanogaster (Fruit fly).